Here is a 382-residue protein sequence, read N- to C-terminus: D-galactonate dehydratase (382 aa).

Aspartate 183 contributes to the Mg(2+) binding site. The Proton donor role is filled by histidine 185. 2 residues coordinate Mg(2+): glutamate 209 and glutamate 235. The active-site Proton acceptor is the histidine 285.

It belongs to the mandelate racemase/muconate lactonizing enzyme family. GalD subfamily. It depends on Mg(2+) as a cofactor.

It catalyses the reaction D-galactonate = 2-dehydro-3-deoxy-D-galactonate + H2O. It functions in the pathway carbohydrate acid metabolism; D-galactonate degradation; D-glyceraldehyde 3-phosphate and pyruvate from D-galactonate: step 1/3. Its function is as follows. Catalyzes the dehydration of D-galactonate to 2-keto-3-deoxy-D-galactonate. This Salmonella choleraesuis (strain SC-B67) protein is D-galactonate dehydratase.